A 782-amino-acid chain; its full sequence is General transcription and DNA repair factor IIH helicase/translocase subunit XPB (782 aa).

The span at 1–11 (MGRKDKSDREK) shows a compositional bias: basic and acidic residues. Disordered stretches follow at residues 1–47 (MGRK…VDES) and 211–242 (TISS…SGTQ). Residues 6 to 17 (KSDREKKSKKRY) carry the Nuclear localization signal motif. The span at 19–28 (EDEEEDEEVI) shows a compositional bias: acidic residues. The segment covering 211–223 (TISSKSAISKSQQ) has biased composition (low complexity). Positions 224 to 242 (DNGGPSSSQPADGQRSGTQ) are enriched in polar residues. The region spanning 326 to 487 (MFGNGRARSG…DLNFLIGPKL (162 aa)) is the Helicase ATP-binding domain. 339 to 346 (LPCGAGKS) contacts ATP. Positions 440-443 (DEVH) match the DEVH box motif. Residues 541-701 (RACQFLIRFH…LAGMEEEDLM (161 aa)) form the Helicase C-terminal domain.

This sequence belongs to the helicase family. RAD25/XPB subfamily. Component of the 7-subunit TFIIH core complex composed of XPB/ERCC3, XPD/ERCC2, GTF2H1, GTF2H2, GTF2H3, GTF2H4 and GTF2H5, which is active in NER. The core complex associates with the 3-subunit CDK-activating kinase (CAK) module composed of CCNH/cyclin H, CDK7 and MNAT1 to form the 10-subunit holoenzyme (holo-TFIIH) active in transcription. Interacts with PUF60. Interacts with ATF7IP. Interacts with Epstein-Barr virus EBNA2.

It localises to the nucleus. The catalysed reaction is Couples ATP hydrolysis with the unwinding of duplex DNA by translocating in the 3'-5' direction.. It catalyses the reaction ATP + H2O = ADP + phosphate + H(+). Functionally, ATP-dependent 3'-5' DNA helicase/translocase; binds dsDNA rather than ssDNA, unzipping it in a translocase rather than classical helicase activity. Component of the general transcription and DNA repair factor IIH (TFIIH) core complex. When complexed to CDK-activating kinase (CAK), involved in RNA transcription by RNA polymerase II. The ATPase activity of XPB/ERCC3, but not its helicase activity, is required for DNA opening; it may wrap around the damaged DNA wedging it open, causing localized melting and twisting that allows XPD/ERCC2 helicase to anchor. The ATP-dependent helicase activity of XPB/ERCC3 may be required for promoter escape. Also involved in transcription-coupled nucleotide excision repair (NER) of damaged DNA. In NER, TFIIH acts by opening DNA around the lesion to allow the excision of the damaged oligonucleotide and its replacement by a new DNA fragment. This is General transcription and DNA repair factor IIH helicase/translocase subunit XPB (ercc3) from Danio rerio (Zebrafish).